A 990-amino-acid polypeptide reads, in one-letter code: Aconitate hydratase 3, mitochondrial (990 aa).

The N-terminal 78 residues, 1 to 78 (MYLTASSSAS…PFRFTSQIRA (78 aa)), are a transit peptide targeting the mitochondrion. Residue Ser91 is modified to Phosphoserine. Substrate-binding positions include Gln182 and 301–303 (DSH). Residues Cys533, Cys599, and Cys602 each contribute to the [4Fe-4S] cluster site. Substrate is bound by residues Arg632, Arg637, Arg795, and 876 to 877 (SR).

It belongs to the aconitase/IPM isomerase family. In terms of assembly, monomer. Interacts with B'GAMMA in the cytosol. [4Fe-4S] cluster is required as a cofactor. Phosphorylated at Ser-91 in the cytoplasm; this phosphorylation requires the presence of B'GAMMA. Major aconitase isoenzyme in young seedlings. Expressed in roots, leaves, stems and flowers, and, at low levels, in seeds.

The protein resides in the mitochondrion. Its subcellular location is the cytoplasm. It carries out the reaction citrate = D-threo-isocitrate. The protein operates within carbohydrate metabolism; tricarboxylic acid cycle; isocitrate from oxaloacetate: step 2/2. In terms of biological role, catalyzes the isomerization of citrate to isocitrate via cis-aconitate. Contributes to oxidative stress tolerance. Modulates cytosolic citrate metabolism during lipid mobilization. Required during seedling growth. This chain is Aconitate hydratase 3, mitochondrial, found in Arabidopsis thaliana (Mouse-ear cress).